The following is a 701-amino-acid chain: Elongation factor G 2 (701 aa).

The 283-residue stretch at 8–290 (NRYRNIGIVA…AVIEFLPAPA (283 aa)) folds into the tr-type G domain. GTP contacts are provided by residues 17–24 (AHVDAGKT), 88–92 (DTPGH), and 142–145 (NKMD).

It belongs to the TRAFAC class translation factor GTPase superfamily. Classic translation factor GTPase family. EF-G/EF-2 subfamily.

Its subcellular location is the cytoplasm. Functionally, catalyzes the GTP-dependent ribosomal translocation step during translation elongation. During this step, the ribosome changes from the pre-translocational (PRE) to the post-translocational (POST) state as the newly formed A-site-bound peptidyl-tRNA and P-site-bound deacylated tRNA move to the P and E sites, respectively. Catalyzes the coordinated movement of the two tRNA molecules, the mRNA and conformational changes in the ribosome. The polypeptide is Elongation factor G 2 (Pseudoalteromonas atlantica (strain T6c / ATCC BAA-1087)).